The following is a 307-amino-acid chain: Transaldolase (307 aa).

The active-site Schiff-base intermediate with substrate is K125.

Belongs to the transaldolase family. Type 1 subfamily.

The protein localises to the cytoplasm. It carries out the reaction D-sedoheptulose 7-phosphate + D-glyceraldehyde 3-phosphate = D-erythrose 4-phosphate + beta-D-fructose 6-phosphate. It participates in carbohydrate degradation; pentose phosphate pathway; D-glyceraldehyde 3-phosphate and beta-D-fructose 6-phosphate from D-ribose 5-phosphate and D-xylulose 5-phosphate (non-oxidative stage): step 2/3. Transaldolase is important for the balance of metabolites in the pentose-phosphate pathway. The protein is Transaldolase of Pseudomonas aeruginosa (strain ATCC 15692 / DSM 22644 / CIP 104116 / JCM 14847 / LMG 12228 / 1C / PRS 101 / PAO1).